The primary structure comprises 145 residues: Ribonuclease H (145 aa).

The RNase H type-1 domain maps to 1 to 141; the sequence is MQEVIIYSDG…ADALANRGVA (141 aa). 4 residues coordinate Mg(2+): Asp-9, Glu-47, Asp-69, and Asp-133.

The protein belongs to the RNase H family. Monomer. Requires Mg(2+) as cofactor.

It is found in the cytoplasm. It carries out the reaction Endonucleolytic cleavage to 5'-phosphomonoester.. Its function is as follows. Endonuclease that specifically degrades the RNA of RNA-DNA hybrids. In Cupriavidus pinatubonensis (strain JMP 134 / LMG 1197) (Cupriavidus necator (strain JMP 134)), this protein is Ribonuclease H.